Consider the following 264-residue polypeptide: 3-methyl-2-oxobutanoate hydroxymethyltransferase (264 aa).

Positions 45 and 84 each coordinate Mg(2+). 3-methyl-2-oxobutanoate is bound by residues 45–46 (DS), aspartate 84, and lysine 112. Glutamate 114 provides a ligand contact to Mg(2+). Glutamate 181 acts as the Proton acceptor in catalysis.

It belongs to the PanB family. Homodecamer; pentamer of dimers. Mg(2+) serves as cofactor.

Its subcellular location is the cytoplasm. It carries out the reaction 3-methyl-2-oxobutanoate + (6R)-5,10-methylene-5,6,7,8-tetrahydrofolate + H2O = 2-dehydropantoate + (6S)-5,6,7,8-tetrahydrofolate. The protein operates within cofactor biosynthesis; (R)-pantothenate biosynthesis; (R)-pantoate from 3-methyl-2-oxobutanoate: step 1/2. In terms of biological role, catalyzes the reversible reaction in which hydroxymethyl group from 5,10-methylenetetrahydrofolate is transferred onto alpha-ketoisovalerate to form ketopantoate. The protein is 3-methyl-2-oxobutanoate hydroxymethyltransferase of Pectobacterium atrosepticum (strain SCRI 1043 / ATCC BAA-672) (Erwinia carotovora subsp. atroseptica).